Here is a 255-residue protein sequence, read N- to C-terminus: Polycomb group RING finger protein 5 (255 aa).

An RING-type zinc finger spans residues 18–57 (CYICKGYLIKPTTVTECLHTFCKTCIVQHFEDSNDCPRCG). Residues 97–132 (WKKNKPQENGQDDMSKVDKPKVDEEGDENQDDKDYH) form a disordered region. Positions 109-119 (DMSKVDKPKVD) are enriched in basic and acidic residues.

As to quaternary structure, component of a PRC1-like complex that contains PCGF5, RNF2 and UBE2D3. Interacts with RNF2; the interaction is direct. Interacts with CBX6, CBX7 and CBX8. Interacts with AUTS2; the interaction is direct. Identified in a complex that contains AUTS2, PCGF5, CSNK2B and RNF2.

It is found in the nucleus. The protein localises to the nucleoplasm. In terms of biological role, component of a Polycomb group (PcG) multiprotein PRC1-like complex, a complex class required to maintain the transcriptionally repressive state of many genes, including Hox genes, throughout development. PcG PRC1 complex acts via chromatin remodeling and modification of histones; it mediates monoubiquitination of histone H2A 'Lys-119', rendering chromatin heritably changed in its expressibility. Within the PRC1-like complex, regulates RNF2 ubiquitin ligase activity. Plays a redundant role with PCGF3 as part of a PRC1-like complex that mediates monoubiquitination of histone H2A 'Lys-119' on the X chromosome and is required for normal silencing of one copy of the X chromosome in XX females. The protein is Polycomb group RING finger protein 5 (PCGF5) of Bos taurus (Bovine).